A 319-amino-acid chain; its full sequence is Protein-methionine-sulfoxide reductase catalytic subunit MsrP (319 aa).

Positions 1 to 40 (MHKLNENDVTPEHIFFERRKIIQSMGLMGAASLLPRFSLA) form a signal peptide, tat-type signal. Residues asparagine 73, 76–77 (YE), cysteine 131, threonine 166, asparagine 218, arginine 223, and 234–236 (NIK) each bind Mo-molybdopterin.

It belongs to the MsrP family. As to quaternary structure, heterodimer of a catalytic subunit (MsrP) and a heme-binding subunit (MsrQ). It depends on Mo-molybdopterin as a cofactor. In terms of processing, predicted to be exported by the Tat system. The position of the signal peptide cleavage has not been experimentally proven.

It is found in the periplasm. The catalysed reaction is L-methionyl-[protein] + a quinone + H2O = L-methionyl-(S)-S-oxide-[protein] + a quinol. The enzyme catalyses L-methionyl-[protein] + a quinone + H2O = L-methionyl-(R)-S-oxide-[protein] + a quinol. Functionally, part of the MsrPQ system that repairs oxidized periplasmic proteins containing methionine sulfoxide residues (Met-O), using respiratory chain electrons. Thus protects these proteins from oxidative-stress damage caused by reactive species of oxygen and chlorine generated by the host defense mechanisms. MsrPQ is essential for the maintenance of envelope integrity under bleach stress, rescuing a wide series of structurally unrelated periplasmic proteins from methionine oxidation. The catalytic subunit MsrP is non-stereospecific, being able to reduce both (R-) and (S-) diastereoisomers of methionine sulfoxide. The polypeptide is Protein-methionine-sulfoxide reductase catalytic subunit MsrP (Pasteurella multocida (strain Pm70)).